The chain runs to 319 residues: Small ribosomal subunit protein mS35 (319 aa).

The N-terminal 30 residues, 1 to 30, are a transit peptide targeting the mitochondrion; the sequence is MKVPLGLWKVSRGNLWSTQKRVLTMSRCLN.

Belongs to the mitochondrion-specific ribosomal protein mS35 family. Component of the mitochondrial small ribosomal subunit (mt-SSU). Mature yeast 74S mitochondrial ribosomes consist of a small (37S) and a large (54S) subunit. The 37S small subunit contains a 15S ribosomal RNA (15S mt-rRNA) and 34 different proteins. The 54S large subunit contains a 21S rRNA (21S mt-rRNA) and 46 different proteins.

The protein resides in the mitochondrion. In terms of biological role, component of the mitochondrial ribosome (mitoribosome), a dedicated translation machinery responsible for the synthesis of mitochondrial genome-encoded proteins, including at least some of the essential transmembrane subunits of the mitochondrial respiratory chain. The mitoribosomes are attached to the mitochondrial inner membrane and translation products are cotranslationally integrated into the membrane. This is Small ribosomal subunit protein mS35 (RSM24) from Saccharomyces cerevisiae (strain ATCC 204508 / S288c) (Baker's yeast).